We begin with the raw amino-acid sequence, 500 residues long: Glycerol kinase (500 aa).

Thr11 serves as a coordination point for ADP. ATP is bound by residues Thr11, Thr12, and Ser13. Sn-glycerol 3-phosphate is bound at residue Thr11. Arg15 is a binding site for ADP. Arg81, Glu82, Tyr133, and Asp242 together coordinate sn-glycerol 3-phosphate. 5 residues coordinate glycerol: Arg81, Glu82, Tyr133, Asp242, and Gln243. Residues Thr264 and Gly307 each contribute to the ADP site. ATP contacts are provided by Thr264, Gly307, Gln311, and Gly411. Residue Gly411 coordinates ADP.

It belongs to the FGGY kinase family.

The catalysed reaction is glycerol + ATP = sn-glycerol 3-phosphate + ADP + H(+). Its pathway is polyol metabolism; glycerol degradation via glycerol kinase pathway; sn-glycerol 3-phosphate from glycerol: step 1/1. Inhibited by fructose 1,6-bisphosphate (FBP). Its function is as follows. Key enzyme in the regulation of glycerol uptake and metabolism. Catalyzes the phosphorylation of glycerol to yield sn-glycerol 3-phosphate. The polypeptide is Glycerol kinase (Bradyrhizobium sp. (strain ORS 278)).